The chain runs to 519 residues: Cell division cycle protein 20 homolog B (519 aa).

Polar residues predominate over residues 79-98 (QSQTRALSSDSFGEEQSTTY). The interval 79–133 (QSQTRALSSDSFGEEQSTTYLPEASGSVLKTPPEKETLTLGSRKEQLKTPSKGIS) is disordered. Positions 110 to 125 (PPEKETLTLGSRKEQL) are enriched in basic and acidic residues. 7 WD repeats span residues 229 to 266 (RNDYYLNILDWSFQNLVAIALGSAVYIWNGENHNGIEN), 271 to 310 (LTCNYISSVSWIKEGTCLAVGTSEGEVQLWDVVTKKRLRN), 311 to 341 (MLGHLSVVGALSWNHFILSSGSRLGRVYHHD), 353 to 392 (RHKQAVCALKWSPDGRLLSSGCSDGLLTIWPHDPGASAQG), 399 to 441 (TQST…SIQT), 443 to 484 (STNS…RSGG), and 487 to 519 (GHRGRVLHLSLSPDQTRVFSAAADGTASVWNCY).

The protein belongs to the WD repeat CDC20/Fizzy family. In terms of tissue distribution, expressed in multiciliated cells (MCCs).

The protein localises to the cytoplasm. Protein regulator of centriole-deuterosome disengagement and subsequently participates in the ciliogenesis in multiciliated cells (MCCs). This is Cell division cycle protein 20 homolog B from Homo sapiens (Human).